Here is a 261-residue protein sequence, read N- to C-terminus: tRNA pseudouridine synthase A (261 aa).

Residue aspartate 51 is the Nucleophile of the active site. Substrate is bound at residue tyrosine 109.

The protein belongs to the tRNA pseudouridine synthase TruA family. Homodimer.

It catalyses the reaction uridine(38/39/40) in tRNA = pseudouridine(38/39/40) in tRNA. Formation of pseudouridine at positions 38, 39 and 40 in the anticodon stem and loop of transfer RNAs. This chain is tRNA pseudouridine synthase A, found in Shewanella sp. (strain W3-18-1).